A 368-amino-acid polypeptide reads, in one-letter code: MDSYEYSELLKKLEQKIENIKNIIKPDLITKRLKEIEQLENSPDFWNDAKKAGEIQKEKNRLSRILEKFEEARSSVEDAKDLFEMATEEEDTETLNMLFEEAPTLEEKVNKIEIETMLSGENDDKNAIVTIHPGAGGTESQDWASILYRMYLRWAERHGFKVEVLDYQEGEEAGIKDVSFIIKGENAYGYLKAENGIHRLVRISPFDSNARRHTSFASVMVSPEVDDDINIVIEDKDIRVDTYRASGAGGQHVNKTDSAIRITHIPTGIVVQCQNDRSQHKNRATAMKMLKSRLYELELEKKRAEQEGIEKSDIGWGHQIRSYVLAPYQQVKDTRSNKAYSNVEAILDGDIDKIIEDVLIAEAEKESK.

Gln-251 is subject to N5-methylglutamine.

This sequence belongs to the prokaryotic/mitochondrial release factor family. In terms of processing, methylated by PrmC. Methylation increases the termination efficiency of RF2.

The protein resides in the cytoplasm. In terms of biological role, peptide chain release factor 2 directs the termination of translation in response to the peptide chain termination codons UGA and UAA. The chain is Peptide chain release factor 2 from Nitratiruptor sp. (strain SB155-2).